The primary structure comprises 84 residues: Large ribosomal subunit protein uL23 (84 aa).

Belongs to the universal ribosomal protein uL23 family. In terms of assembly, part of the 50S ribosomal subunit. Contacts protein L29.

Its function is as follows. Binds to 23S rRNA. One of the proteins that surrounds the polypeptide exit tunnel on the outside of the ribosome. The chain is Large ribosomal subunit protein uL23 from Halobacterium salinarum (strain ATCC 700922 / JCM 11081 / NRC-1) (Halobacterium halobium).